A 481-amino-acid polypeptide reads, in one-letter code: NADH-quinone oxidoreductase subunit N (481 aa).

14 helical membrane passes run 11 to 31 (AYPE…DLFA), 37 to 57 (YLAF…TCGI), 74 to 94 (AMSD…LIYS), 103 to 123 (LLKG…MVMV), 128 to 148 (LITL…MVAL), 162 to 182 (FFVL…MLYG), 205 to 225 (IFII…SAVP), 238 to 258 (PTAV…GFVM), 272 to 292 (WQGM…IAAI), 300 to 320 (MLAY…IAAG), 328 to 348 (MFYV…IMLV), 371 to 391 (LAFM…MIGF), 405 to 425 (GYIW…FYYL), and 457 to 477 (LAII…LSAI).

Belongs to the complex I subunit 2 family. In terms of assembly, NDH-1 is composed of 14 different subunits. Subunits NuoA, H, J, K, L, M, N constitute the membrane sector of the complex.

The protein resides in the cell inner membrane. It carries out the reaction a quinone + NADH + 5 H(+)(in) = a quinol + NAD(+) + 4 H(+)(out). NDH-1 shuttles electrons from NADH, via FMN and iron-sulfur (Fe-S) centers, to quinones in the respiratory chain. The immediate electron acceptor for the enzyme in this species is believed to be ubiquinone. Couples the redox reaction to proton translocation (for every two electrons transferred, four hydrogen ions are translocated across the cytoplasmic membrane), and thus conserves the redox energy in a proton gradient. This Nitrosomonas europaea (strain ATCC 19718 / CIP 103999 / KCTC 2705 / NBRC 14298) protein is NADH-quinone oxidoreductase subunit N.